We begin with the raw amino-acid sequence, 373 residues long: MNAPVKILNPVGLLAELTHRCPLACPYCSNPLELDSRAAELDTAAWIKVFTEAAELGVLHAHLSGGEPAARRDLVEIVAHCASVGLYTNLITSGIGLTQERIKALADAGLDHVQLSIQDAEAKSADHIAGYEGAFARKQSVAAWVTAAGLPLTVNAVIHRANAERAGQMVKLAVALGARRVEIAHTQYYGWGIVNRAALMPTKAQADAAIAEVEALREVYAGVIVIDHVIPDYHARHPKACMGGWAKRTLNVTPTGKVLPCHAAETIPGLEFWNVRDHSLRDVWFASPAFNAFRGTEWMKEPCRSCPRKEIDFGGCRCQAFALTGDANAADPVCHLSPDHDKVAAIAAHANEEEAATEIAYVYRGVKAPVPAE.

The region spanning 7–227 (ILNPVGLLAE…EVYAGVIVID (221 aa)) is the Radical SAM core domain. Positions 21, 25, and 28 each coordinate [4Fe-4S] cluster.

Belongs to the radical SAM superfamily. PqqE family. As to quaternary structure, interacts with PqqD. The interaction is necessary for activity of PqqE. [4Fe-4S] cluster serves as cofactor.

The enzyme catalyses [PQQ precursor protein] + S-adenosyl-L-methionine = E-Y cross-linked-[PQQ precursor protein] + 5'-deoxyadenosine + L-methionine + H(+). It functions in the pathway cofactor biosynthesis; pyrroloquinoline quinone biosynthesis. Its function is as follows. Catalyzes the cross-linking of a glutamate residue and a tyrosine residue in the PqqA protein as part of the biosynthesis of pyrroloquinoline quinone (PQQ). This Methylocella silvestris (strain DSM 15510 / CIP 108128 / LMG 27833 / NCIMB 13906 / BL2) protein is PqqA peptide cyclase.